The primary structure comprises 121 residues: Replication protein A 14 kDa subunit (121 aa).

Residue Val2 is modified to N-acetylvaline. Glycyl lysine isopeptide (Lys-Gly) (interchain with G-Cter in ubiquitin) cross-links involve residues Lys23, Lys39, and Lys88.

This sequence belongs to the replication factor A protein 3 family. Component of the canonical replication protein A complex (RPA), a heterotrimer composed of RPA1, RPA2 and RPA3. Also a component of the aRPA, the alternative replication protein A complex, a trimeric complex similar to the replication protein A complex/RPA but where RPA1 and RPA3 are associated with RPA4 instead of RPA2. Interacts with BRIP1/FANCJ via the RPA1 subunit; following DNA damage they colocalize in foci in the nucleus. In terms of processing, ubiquitinated by RFWD3 at stalled replication forks in response to DNA damage: ubiquitination by RFWD3 does not lead to degradation by the proteasome and promotes removal of the RPA complex from stalled replication forks, promoting homologous recombination.

The protein resides in the nucleus. In terms of biological role, as part of the heterotrimeric replication protein A complex (RPA/RP-A), binds and stabilizes single-stranded DNA intermediates that form during DNA replication or upon DNA stress. It prevents their reannealing and in parallel, recruits and activates different proteins and complexes involved in DNA metabolism. Thereby, it plays an essential role both in DNA replication and the cellular response to DNA damage. In the cellular response to DNA damage, the RPA complex controls DNA repair and DNA damage checkpoint activation. Through recruitment of ATRIP activates the ATR kinase a master regulator of the DNA damage response. It is required for the recruitment of the DNA double-strand break repair factors RAD51 and RAD52 to chromatin, in response to DNA damage. Also recruits to sites of DNA damage proteins like XPA and XPG that are involved in nucleotide excision repair and is required for this mechanism of DNA repair. Also plays a role in base excision repair (BER), probably through interaction with UNG. RPA stimulates 5'-3' helicase activity of BRIP1/FANCJ. Also recruits SMARCAL1/HARP, which is involved in replication fork restart, to sites of DNA damage. May also play a role in telomere maintenance. RPA3 has its own single-stranded DNA-binding activity and may be responsible for polarity of the binding of the complex to DNA. As part of the alternative replication protein A complex, aRPA, binds single-stranded DNA and probably plays a role in DNA repair. Compared to the RPA2-containing, canonical RPA complex, may not support chromosomal DNA replication and cell cycle progression through S-phase. The aRPA may not promote efficient priming by DNA polymerase alpha but could support DNA synthesis by polymerase delta in presence of PCNA and replication factor C (RFC), the dual incision/excision reaction of nucleotide excision repair and RAD51-dependent strand exchange. This chain is Replication protein A 14 kDa subunit (RPA3), found in Homo sapiens (Human).